The primary structure comprises 87 residues: Small ribosomal subunit protein bS20 (87 aa).

Positions 1-26 (MANIKSAKKRAIQSEKARKHNASRRS) are disordered.

This sequence belongs to the bacterial ribosomal protein bS20 family.

Its function is as follows. Binds directly to 16S ribosomal RNA. The polypeptide is Small ribosomal subunit protein bS20 (Escherichia coli O17:K52:H18 (strain UMN026 / ExPEC)).